Here is a 257-residue protein sequence, read N- to C-terminus: Capsid protein (257 aa).

This sequence belongs to the geminiviridae capsid protein family.

Its subcellular location is the virion. Functionally, encapsidates the viral DNA into characteristic twinned ('geminate') particles. Plays a role in protection of the genome from degradation, virus acquisition and transmission by insect vectors, infectivity, and systemic movement. The protein is Capsid protein of Capsicum annuum (Capsicum pepper).